The following is a 398-amino-acid chain: 1-deoxy-D-xylulose 5-phosphate reductoisomerase (398 aa).

The NADPH site is built by T10, G11, S12, I13, and N124. K125 is a binding site for 1-deoxy-D-xylulose 5-phosphate. Residue E126 coordinates NADPH. Mn(2+) is bound at residue D150. 1-deoxy-D-xylulose 5-phosphate is bound by residues S151, E152, S186, and H209. Residue E152 coordinates Mn(2+). G215 is an NADPH binding site. Residues S222, N227, K228, and E231 each coordinate 1-deoxy-D-xylulose 5-phosphate. E231 provides a ligand contact to Mn(2+).

The protein belongs to the DXR family. It depends on Mg(2+) as a cofactor. Mn(2+) is required as a cofactor.

It carries out the reaction 2-C-methyl-D-erythritol 4-phosphate + NADP(+) = 1-deoxy-D-xylulose 5-phosphate + NADPH + H(+). It participates in isoprenoid biosynthesis; isopentenyl diphosphate biosynthesis via DXP pathway; isopentenyl diphosphate from 1-deoxy-D-xylulose 5-phosphate: step 1/6. Functionally, catalyzes the NADPH-dependent rearrangement and reduction of 1-deoxy-D-xylulose-5-phosphate (DXP) to 2-C-methyl-D-erythritol 4-phosphate (MEP). This Tolumonas auensis (strain DSM 9187 / NBRC 110442 / TA 4) protein is 1-deoxy-D-xylulose 5-phosphate reductoisomerase.